Consider the following 100-residue polypeptide: Large ribosomal subunit protein bL21 (100 aa).

Belongs to the bacterial ribosomal protein bL21 family. In terms of assembly, part of the 50S ribosomal subunit. Contacts protein L20.

This protein binds to 23S rRNA in the presence of protein L20. The protein is Large ribosomal subunit protein bL21 of Corynebacterium jeikeium (strain K411).